The chain runs to 364 residues: Chorismate synthase (364 aa).

2 residues coordinate NADP(+): arginine 48 and arginine 54. Residues 125-127, 238-239, glycine 278, 293-297, and arginine 319 each bind FMN; these read RSS, NA, and KPTSS.

It belongs to the chorismate synthase family. In terms of assembly, homotetramer. The cofactor is FMNH2.

The enzyme catalyses 5-O-(1-carboxyvinyl)-3-phosphoshikimate = chorismate + phosphate. The protein operates within metabolic intermediate biosynthesis; chorismate biosynthesis; chorismate from D-erythrose 4-phosphate and phosphoenolpyruvate: step 7/7. Functionally, catalyzes the anti-1,4-elimination of the C-3 phosphate and the C-6 proR hydrogen from 5-enolpyruvylshikimate-3-phosphate (EPSP) to yield chorismate, which is the branch point compound that serves as the starting substrate for the three terminal pathways of aromatic amino acid biosynthesis. This reaction introduces a second double bond into the aromatic ring system. The protein is Chorismate synthase of Shewanella woodyi (strain ATCC 51908 / MS32).